The following is a 149-amino-acid chain: Large ribosomal subunit protein uL15 (149 aa).

The segment covering 1-12 has biased composition (basic and acidic residues); it reads MSEPIKLHDLRP. Residues 1–55 are disordered; that stretch reads MSEPIKLHDLRPAKGANKPKTRVGRGEASKGKTAGRGTKGTKARKQVSAAFEGGQ.

It belongs to the universal ribosomal protein uL15 family. As to quaternary structure, part of the 50S ribosomal subunit.

Binds to the 23S rRNA. This is Large ribosomal subunit protein uL15 from Corynebacterium kroppenstedtii (strain DSM 44385 / JCM 11950 / CIP 105744 / CCUG 35717).